Here is a 348-residue protein sequence, read N- to C-terminus: Lipoyl synthase (348 aa).

[4Fe-4S] cluster is bound by residues C55, C60, C66, C81, C85, C88, and S292. Residues 67-281 (WESREATFLI…SDEAYEIGFA (215 aa)) enclose the Radical SAM core domain.

It belongs to the radical SAM superfamily. Lipoyl synthase family. Requires [4Fe-4S] cluster as cofactor.

The protein resides in the cytoplasm. The enzyme catalyses [[Fe-S] cluster scaffold protein carrying a second [4Fe-4S](2+) cluster] + N(6)-octanoyl-L-lysyl-[protein] + 2 oxidized [2Fe-2S]-[ferredoxin] + 2 S-adenosyl-L-methionine + 4 H(+) = [[Fe-S] cluster scaffold protein] + N(6)-[(R)-dihydrolipoyl]-L-lysyl-[protein] + 4 Fe(3+) + 2 hydrogen sulfide + 2 5'-deoxyadenosine + 2 L-methionine + 2 reduced [2Fe-2S]-[ferredoxin]. It functions in the pathway protein modification; protein lipoylation via endogenous pathway; protein N(6)-(lipoyl)lysine from octanoyl-[acyl-carrier-protein]: step 2/2. Its function is as follows. Catalyzes the radical-mediated insertion of two sulfur atoms into the C-6 and C-8 positions of the octanoyl moiety bound to the lipoyl domains of lipoate-dependent enzymes, thereby converting the octanoylated domains into lipoylated derivatives. In Corynebacterium efficiens (strain DSM 44549 / YS-314 / AJ 12310 / JCM 11189 / NBRC 100395), this protein is Lipoyl synthase.